Consider the following 1049-residue polypeptide: Vacuolar membrane protease (1049 aa).

At 1-11 (MKCYNPSAFVP) the chain is on the cytoplasmic side. A helical membrane pass occupies residues 12–32 (MAVTLVTVIIYLGVFIPLLII). The Vacuolar segment spans residues 33–438 (QETVPSAPDD…TVFAVFKLRT (406 aa)). Residue Asn50 is glycosylated (N-linked (GlcNAc...) asparagine). A disordered region spans residues 114–135 (DAEAPESVPSPSNSNDGSAERY). N-linked (GlcNAc...) asparagine glycosylation occurs at Asn157. 2 residues coordinate Zn(2+): His221 and Asp233. Glu267 functions as the Proton acceptor in the catalytic mechanism. The Zn(2+) site is built by Glu268, Glu293, and His365. A helical transmembrane segment spans residues 439 to 459 (LFAWSLTLLIAAPLMLFAVSY). The Cytoplasmic portion of the chain corresponds to 460–495 (LLNRQDKFYFFAGSIKAKGPEDEPISLGGWRGAFRY). The helical transmembrane segment at 496–516 (PITLIITCAITFGCASLINKI) threads the bilayer. Over 517-526 (NPMIVYSSPY) the chain is Vacuolar. A helical membrane pass occupies residues 527–547 (SVWSMSASLFFSIFWFIMAGC). The Cytoplasmic segment spans residues 548 to 557 (NFVRPSALQR). A helical membrane pass occupies residues 558-578 (GYAFMWLFVFGWIILVAATVY). At 579–585 (EDRFKIS) the chain is on the vacuolar side. A helical transmembrane segment spans residues 586 to 606 (GGYLFVFYEAAIFLATLIAIG). The Cytoplasmic portion of the chain corresponds to 607–740 (EQFALPKKST…LPIWTWLVQY (134 aa)). A disordered region spans residues 621 to 686 (SQLDHDGNQD…IGGGAPTQRS (66 aa)). A compositionally biased stretch (basic and acidic residues) spans 622 to 633 (QLDHDGNQDSHH). The segment covering 655-664 (GQEEDPEDNV) has biased composition (acidic residues). Residues 741-761 (LLVGPFILIVVGQVGLFLVAA) traverse the membrane as a helical segment. At 762–773 (LHQTGTDGSPLL) the chain is on the vacuolar side. Residues 774-794 (LPYLVVAVFSILLLLPVTPFI) traverse the membrane as a helical segment. At 795-801 (HRLTHHM) the chain is on the cytoplasmic side. A helical membrane pass occupies residues 802–822 (PTFFFLVFIGTLIYNLVAFPF). The Vacuolar portion of the chain corresponds to 823–1049 (SPNNRYKAYF…LVEGSKRFVV (227 aa)). Asn914 carries N-linked (GlcNAc...) asparagine glycosylation.

The protein belongs to the peptidase M28 family. Zn(2+) is required as a cofactor.

It is found in the vacuole membrane. In terms of biological role, may be involved in vacuolar sorting and osmoregulation. This chain is Vacuolar membrane protease, found in Botryotinia fuckeliana (strain B05.10) (Noble rot fungus).